The primary structure comprises 300 residues: Dipeptide transport system permease protein DppC (300 aa).

The Cytoplasmic segment spans residues 1–31 (MSQVTENKVISAPVPMTPLQEFWHYFKRNKG). A helical membrane pass occupies residues 32–52 (AVVGLVYVVIVLFIAIFANWI). Topologically, residues 53 to 101 (APYNPAEQFRDALLAPPAWQEGGSMAHLLGTDDVGRDVLSRLMYGARLS) are periplasmic. The 190-residue stretch at 98–287 (ARLSLLVGCL…LTVLAFNLMG (190 aa)) folds into the ABC transmembrane type-1 domain. The helical transmembrane segment at 102–122 (LLVGCLVVVLSLIMGVILGLI) threads the bilayer. The Cytoplasmic segment spans residues 123–136 (AGYFGGLVDNIIMR). Residues 137 to 157 (VVDIMLALPSLLLALVLVAIF) traverse the membrane as a helical segment. Residues 158–206 (GPSIGNAALALTFVALPHYVRLTRAAVLVEVNRDYVTASRVAGAGAMRQ) lie on the Periplasmic side of the membrane. Residues 207-227 (MFINIFPNCLAPLIVQASLGF) traverse the membrane as a helical segment. The Cytoplasmic segment spans residues 228-230 (SNA). A helical membrane pass occupies residues 231–251 (ILDMAALGFLGMGAQPPTPEW). Residues 252-265 (GTMLSDVLQFAQSA) are Periplasmic-facing. Residues 266–286 (WWVVTFPGLAILLTVLAFNLM) traverse the membrane as a helical segment. Over 287 to 300 (GDGLRDALDPKLKQ) the chain is Cytoplasmic.

Belongs to the binding-protein-dependent transport system permease family. OppBC subfamily. In terms of assembly, the complex is composed of two ATP-binding proteins (DppD and DppF), two transmembrane proteins (DppB and DppC) and a solute-binding protein (DppA).

The protein localises to the cell inner membrane. Functionally, part of the ABC transporter DppABCDF involved in dipeptide transport. Responsible for the translocation of the substrate across the membrane. This is Dipeptide transport system permease protein DppC (dppC) from Escherichia coli O157:H7.